A 177-amino-acid chain; its full sequence is MSRIGKKPVQVPAGITASVDGQKVTAKGPKGELFFVANDEISVALEDNAIVVKPVNDSKDARSKWGMSRTMIENILKGVKDGYERKLEINGVGYRASLQGKNLQLALGFSHDVVYEPPQGITIAVPKPTEIVVSGINKQQVGQVAAEIREYRGPEPYKGKGVKYAEERIVRKEGKKK.

The protein belongs to the universal ribosomal protein uL6 family. As to quaternary structure, part of the 50S ribosomal subunit.

This protein binds to the 23S rRNA, and is important in its secondary structure. It is located near the subunit interface in the base of the L7/L12 stalk, and near the tRNA binding site of the peptidyltransferase center. This Allorhizobium ampelinum (strain ATCC BAA-846 / DSM 112012 / S4) (Agrobacterium vitis (strain S4)) protein is Large ribosomal subunit protein uL6.